Consider the following 108-residue polypeptide: UPF0060 membrane protein SA2130 (108 aa).

The next 4 membrane-spanning stretches (helical) occupy residues 5–25 (IFIF…IWLW), 31–51 (SSLV…IATF), 60–80 (VYAA…MVVD), and 86–106 (KYDV…LLPS).

It belongs to the UPF0060 family.

The protein localises to the cell membrane. The chain is UPF0060 membrane protein SA2130 from Staphylococcus aureus (strain N315).